Reading from the N-terminus, the 141-residue chain is Large ribosomal subunit protein uL11 (141 aa).

It belongs to the universal ribosomal protein uL11 family. As to quaternary structure, part of the ribosomal stalk of the 50S ribosomal subunit. Interacts with L10 and the large rRNA to form the base of the stalk. L10 forms an elongated spine to which L12 dimers bind in a sequential fashion forming a multimeric L10(L12)X complex. In terms of processing, one or more lysine residues are methylated.

Functionally, forms part of the ribosomal stalk which helps the ribosome interact with GTP-bound translation factors. This Kosmotoga olearia (strain ATCC BAA-1733 / DSM 21960 / TBF 19.5.1) protein is Large ribosomal subunit protein uL11.